A 265-amino-acid polypeptide reads, in one-letter code: Thymidine kinase 2, mitochondrial (265 aa).

The transit peptide at 1–33 (MLLWPLRGWAARALRCFGPGSRGSPASGPGPRR) directs the protein to the mitochondrion. A compositionally biased stretch (low complexity) spans 20–32 (GSRGSPASGPGPR). Positions 20–47 (GSRGSPASGPGPRRVQRRAWPPDKEQEK) are disordered. 57-65 (GNIASGKTT) contributes to the ATP binding site. E133 (proton acceptor) is an active-site residue.

Belongs to the DCK/DGK family. As to quaternary structure, monomer. Predominantly expressed in liver, pancreas, muscle, and brain.

The protein resides in the mitochondrion. The enzyme catalyses thymidine + ATP = dTMP + ADP + H(+). The catalysed reaction is 2'-deoxycytidine + ATP = dCMP + ADP + H(+). It carries out the reaction 2'-deoxyuridine + ATP = dUMP + ADP + H(+). Its function is as follows. Phosphorylates thymidine, deoxycytidine, and deoxyuridine in the mitochondrial matrix. In non-replicating cells, where cytosolic dNTP synthesis is down-regulated, mtDNA synthesis depends solely on TK2 and DGUOK. Widely used as target of antiviral and chemotherapeutic agents. This Homo sapiens (Human) protein is Thymidine kinase 2, mitochondrial.